We begin with the raw amino-acid sequence, 660 residues long: DNA polymerase alpha-associated DNA helicase A (660 aa).

Residue 232–239 (GPPGTGKT) participates in ATP binding.

The protein belongs to the DNA2/NAM7 helicase family. As to quaternary structure, associates with the hexameric DNA polymerase alpha.

The protein resides in the cytoplasm. The protein localises to the nucleus. The enzyme catalyses ATP + H2O = ADP + phosphate + H(+). DNA polymerase alpha-associated DNA helicase which may be involved in DNA replication. The sequence is that of DNA polymerase alpha-associated DNA helicase A (hcs1) from Schizosaccharomyces pombe (strain 972 / ATCC 24843) (Fission yeast).